Reading from the N-terminus, the 430-residue chain is Inactive metallocarboxypeptidase ECM14 (430 aa).

A signal peptide spans 1-24 (MLHMNSLWGCFLFVLLAVTGAVQG). The propeptide occupies 25–105 (LQEDYSEYAV…TLPTSQMMAR (81 aa)). N-linked (GlcNAc...) asparagine glycosylation is present at N41. Positions 120-425 (EYRDLDTIYM…AALKYFCDFL (306 aa)) constitute a Peptidase M14 domain. Positions 182 and 185 each coordinate Zn(2+). Residues 182–185 (HARE), R240, and 257–258 (DH) contribute to the substrate site. Residues C251 and C272 are joined by a disulfide bond. The N-linked (GlcNAc...) asparagine glycan is linked to N295. A Zn(2+)-binding site is contributed by H310. A substrate-binding site is contributed by 311–312 (SY).

The protein belongs to the peptidase M14 family. Requires Zn(2+) as cofactor. Post-translationally, N-glycosylated.

The protein resides in the vacuole. It localises to the secreted. Inactive carboxypeptidase that may play a role in cell wall organization and biogenesis. This chain is Inactive metallocarboxypeptidase ECM14, found in Saccharomyces cerevisiae (strain ATCC 204508 / S288c) (Baker's yeast).